A 359-amino-acid chain; its full sequence is N-acetyl-gamma-glutamyl-phosphate reductase (359 aa).

C162 is an active-site residue.

The protein belongs to the NAGSA dehydrogenase family. Type 1 subfamily.

The protein localises to the cytoplasm. The enzyme catalyses N-acetyl-L-glutamate 5-semialdehyde + phosphate + NADP(+) = N-acetyl-L-glutamyl 5-phosphate + NADPH + H(+). It functions in the pathway amino-acid biosynthesis; L-arginine biosynthesis; N(2)-acetyl-L-ornithine from L-glutamate: step 3/4. Its function is as follows. Catalyzes the NADPH-dependent reduction of N-acetyl-5-glutamyl phosphate to yield N-acetyl-L-glutamate 5-semialdehyde. In Prochlorococcus marinus (strain SARG / CCMP1375 / SS120), this protein is N-acetyl-gamma-glutamyl-phosphate reductase.